The following is a 320-amino-acid chain: Annexin A5 (320 aa).

At Ala2 the chain carries N-acetylalanine. 4 Annexin repeats span residues 15-86 (FDER…ALMK), 87-158 (PSRL…VLLQ), 170-242 (AQVE…AVVK), and 246-317 (SIPA…LLCG). Lys29 participates in a covalent cross-link: Glycyl lysine isopeptide (Lys-Gly) (interchain with G-Cter in SUMO1); alternate. Lys29 is covalently cross-linked (Glycyl lysine isopeptide (Lys-Gly) (interchain with G-Cter in SUMO2); alternate). Phosphoserine is present on Ser37. 5 positions are modified to N6-acetyllysine: Lys70, Lys76, Lys79, Lys97, and Lys101. Residue Lys290 is modified to N6-succinyllysine. Residues 314–319 (LLCGED) carry the [IL]-x-C-x-x-[DE] motif motif.

The protein belongs to the annexin family. In terms of assembly, monomer. Binds ATRX and EIF5B. Interacts with hepatitis B virus (HBV). Post-translationally, S-nitrosylation is induced by interferon-gamma and oxidatively-modified low-densitity lipoprotein (LDL(ox)) possibly implicating the iNOS-S100A8/9 transnitrosylase complex.

Functionally, this protein is an anticoagulant protein that acts as an indirect inhibitor of the thromboplastin-specific complex, which is involved in the blood coagulation cascade. In Homo sapiens (Human), this protein is Annexin A5 (ANXA5).